The sequence spans 166 residues: MWSFLKISLIVAMDKKRVIGKDNDIPWRISSDWEYVKNTTKGHAIILGRKNLQSIGRALPDRRNIILTRDKNFNFKDCEIAHSIEAAFKLCENEEEVFIFGGEQIYVMFLPYVEKMYVTKIHHEFEGDTFFPVVNFDDWKEVSVEKGIKDEKNPYDYYFHIYERIR.

Residues 6 to 164 form the DHFR domain; that stretch reads KISLIVAMDK…YDYYFHIYER (159 aa). 10–12 lines the substrate pocket; it reads IVA. NADP(+) contacts are provided by residues 11–12 and 19–24; these read VA and IGKDND. D32 is a substrate binding site. 48–51 is a binding site for NADP(+); sequence GRKN. R62 serves as a coordination point for substrate. Residues 67–70 and 100–105 contribute to the NADP(+) site; these read LTRD and FGGEQI. Residue T119 coordinates substrate.

This sequence belongs to the dihydrofolate reductase family.

It carries out the reaction (6S)-5,6,7,8-tetrahydrofolate + NADP(+) = 7,8-dihydrofolate + NADPH + H(+). Its pathway is cofactor biosynthesis; tetrahydrofolate biosynthesis; 5,6,7,8-tetrahydrofolate from 7,8-dihydrofolate: step 1/1. In terms of biological role, key enzyme in folate metabolism. Catalyzes an essential reaction for de novo glycine and purine synthesis, and for DNA precursor synthesis. The protein is Dihydrofolate reductase (dfrD) of Staphylococcus haemolyticus.